The following is a 602-amino-acid chain: Alpha-glucosides permease MPH3 (602 aa).

At 1-106 the chain is on the cytoplasmic side; the sequence is MKNLSFLINR…AAAWSLLVST (106 aa). The helical transmembrane segment at 107 to 127 threads the bilayer; the sequence is TLIMEGYDTAILGAFYALPIF. Over 128–142 the chain is Extracellular; sequence QRKFGSQNDKTGEWE. Residues 143–163 traverse the membrane as a helical segment; it reads ISASWQIGLTLCYMAGEIVGL. The Cytoplasmic portion of the chain corresponds to 164–178; that stretch reads QLTGPSVDLVGNRYT. Residues 179-199 traverse the membrane as a helical segment; that stretch reads LIIALFFLAAFTFILYFCNSL. Gly-200 is a topological domain (extracellular). Residues 201-221 form a helical membrane-spanning segment; that stretch reads MIAVGQALCGMPWGCFQCLTV. Residues 222-234 are Cytoplasmic-facing; it reads SYASEICPLALRY. A helical transmembrane segment spans residues 235–255; that stretch reads YLTTYSNLCWLFGQLFAAGIM. Topologically, residues 256-270 are extracellular; that stretch reads KNSQKKYADSELGYK. A helical transmembrane segment spans residues 271 to 291; that stretch reads LPFALQWILPVPLALGIFFAP. Topologically, residues 292–363 are cytoplasmic; sequence ESPWWLVKKG…EDKINRRRTR (72 aa). A helical transmembrane segment spans residues 364 to 384; sequence ITCLCWAGQATCGSILIGYST. At 385-397 the chain is on the extracellular side; sequence YFYEKAGVSTEMS. Residues 398–418 traverse the membrane as a helical segment; it reads FTFSIIQYCLGICATFLSWWA. Topologically, residues 419 to 426 are cytoplasmic; that stretch reads SKYFGRYD. The chain crosses the membrane as a helical span at residues 427–447; that stretch reads LYAFGLAFQTIVFFIIGGLGC. Topologically, residues 448–459 are extracellular; it reads SSTHGSKMGSGS. The chain crosses the membrane as a helical span at residues 460 to 480; that stretch reads LLMAVAFFYNLGIAPVVFCLV. Residues 481-492 are Cytoplasmic-facing; that stretch reads SEMPSSRLRTKT. The helical transmembrane segment at 493–513 threads the bilayer; it reads IILARNTYNVVSIICSVLILY. Over 514 to 525 the chain is Extracellular; sequence QLNSKKWNWGAK. A helical transmembrane segment spans residues 526–546; sequence SGFFWGVLCFCTLIWAVVDLP. At 547-602 the chain is on the cytoplasmic side; the sequence is ETAGKTFVEINELFKLGVSARKFKSTKVDPFVVKNTPKYVSHNDPKGDIEASIAEE.

The protein belongs to the major facilitator superfamily. Sugar transporter (TC 2.A.1.1) family.

It is found in the cell membrane. Its function is as follows. High-affinity uptake of maltose and maltotriose. Also transports alpha-methylglucoside, glucose and turanose but not melezitose or trehalose. The sequence is that of Alpha-glucosides permease MPH3 (MPH3) from Saccharomyces cerevisiae (strain YJM789) (Baker's yeast).